Reading from the N-terminus, the 406-residue chain is Leu/Ile/Val-binding protein homolog 5 (406 aa).

A signal peptide spans 1-29; it reads MIGTRLPAWTRVLACGVAGLSLMTISAKA.

Belongs to the leucine-binding protein family.

In terms of biological role, component of an amino-acid transport system. The sequence is that of Leu/Ile/Val-binding protein homolog 5 from Brucella abortus (strain 2308).